We begin with the raw amino-acid sequence, 393 residues long: Arginine biosynthesis bifunctional protein ArgJ 3 (393 aa).

6 residues coordinate substrate: T148, K170, T181, E260, N388, and T393. Residue T181 is the Nucleophile of the active site.

It belongs to the ArgJ family. In terms of assembly, heterotetramer of two alpha and two beta chains.

It is found in the cytoplasm. The enzyme catalyses N(2)-acetyl-L-ornithine + L-glutamate = N-acetyl-L-glutamate + L-ornithine. It carries out the reaction L-glutamate + acetyl-CoA = N-acetyl-L-glutamate + CoA + H(+). It functions in the pathway amino-acid biosynthesis; L-arginine biosynthesis; L-ornithine and N-acetyl-L-glutamate from L-glutamate and N(2)-acetyl-L-ornithine (cyclic): step 1/1. It participates in amino-acid biosynthesis; L-arginine biosynthesis; N(2)-acetyl-L-ornithine from L-glutamate: step 1/4. Its function is as follows. Catalyzes two activities which are involved in the cyclic version of arginine biosynthesis: the synthesis of N-acetylglutamate from glutamate and acetyl-CoA as the acetyl donor, and of ornithine by transacetylation between N(2)-acetylornithine and glutamate. The sequence is that of Arginine biosynthesis bifunctional protein ArgJ 3 from Streptomyces clavuligerus.